The chain runs to 218 residues: Probable nicotinate-nucleotide adenylyltransferase (218 aa).

It belongs to the NadD family.

It carries out the reaction nicotinate beta-D-ribonucleotide + ATP + H(+) = deamido-NAD(+) + diphosphate. Its pathway is cofactor biosynthesis; NAD(+) biosynthesis; deamido-NAD(+) from nicotinate D-ribonucleotide: step 1/1. Catalyzes the reversible adenylation of nicotinate mononucleotide (NaMN) to nicotinic acid adenine dinucleotide (NaAD). This is Probable nicotinate-nucleotide adenylyltransferase from Helicobacter hepaticus (strain ATCC 51449 / 3B1).